We begin with the raw amino-acid sequence, 388 residues long: Flavin oxidoreductase hxnT (388 aa).

It belongs to the NADH:flavin oxidoreductase/NADH oxidase family. The cofactor is FMN.

Functionally, flavin oxidoreductase, part of the hnx cluster involved in the purine degradation. The nicotinate hydroxylase hnxS accepts nicotinate as a substrate and catalyzes the first step of nicotinate catabolism. The major facilitator-type transporters hxnP and hxnZ are probably involved in the uptake of nicotinate-derived metabolites, and the oxidoreductases hxnT and hxnY in the further metabolism of 6-OH nicotinic acid. The chain is Flavin oxidoreductase hxnT from Emericella nidulans (strain FGSC A4 / ATCC 38163 / CBS 112.46 / NRRL 194 / M139) (Aspergillus nidulans).